The following is a 112-amino-acid chain: Signal recognition particle 19 kDa protein (112 aa).

The protein belongs to the SRP19 family. In terms of assembly, part of the signal recognition particle protein translocation system, which is composed of SRP and FtsY. Archaeal SRP consists of a 7S RNA molecule of 300 nucleotides and two protein subunits: SRP54 and SRP19.

Its subcellular location is the cytoplasm. In terms of biological role, involved in targeting and insertion of nascent membrane proteins into the cytoplasmic membrane. Binds directly to 7S RNA and mediates binding of the 54 kDa subunit of the SRP. This is Signal recognition particle 19 kDa protein from Aeropyrum pernix (strain ATCC 700893 / DSM 11879 / JCM 9820 / NBRC 100138 / K1).